We begin with the raw amino-acid sequence, 882 residues long: MGPWSRSLSALLLLLQVSSWLCQEPEPCHPGFDAESYTFTVPRRHLERGRVLGRVNFEDCTGRQRTAYFSLDTRFKVGTDGVITVKRPLRFHNPQIHFLVYAWDSTYRKFSTKVTLNTVGHHHRPLPHQASVSGIQAELLTFPNSSSGLRRRKRDWVIPPISCPENEKGPFPKNLVQIKSNKDKEGKVFYSITGQGADTPPVGVFIIERETGWLKVTEPLDRERIATYTLFSHAVSSNGNAVEDPMEILITVTDQNDNKPEFTQEVFKGSVMEGALPGTSVMEVTATDADDDVNTYNAAIAYTILSQDPELPDKNMFTINRNTGVISVVTTGLDRESFPTYTLVVQAADLQGEGLSTTATAVITVTDTNDNPPVFNPTTYKGQVPEDEANVVITTLKVTDADAPSTPAWEAVYTILNDNGGQFVVTTNPVNNDGILKTAKGLDFEAKQQYILHVAVTNVVPFEVSLTTSTATVTVDVLDVNEAPIFVPPEKRVEVSEDFGVGQEITSYTAWEPDTFMEQKITYRIWRDTANWLEINPDTGAISTRAELDREDVEHVKNSTYTALIIATDNGSPVATGTGTLLLILSDVNDNAPIPEPRTLFFCERNPKPQVINIIDADLPPNTSPFTAELTHGASANWTIQYNDPTQESIILKPKMALEVGDYKINLKLMDNQNKDQVTTLEVGVCDCEGVAGVCKKAQPIEAGLQIPAILGILGGILALLILILLLLLFLRRRAVVKEPLLPPEDDTRDNVYYYDEEGGGEEDQDFDLSQLHRGLDARPEVTRNDVAPTLMSVPRYLPRPANPVEIGNFIDENLKAADTDPTAPPYDSLLVFDYEGSGSEAASLSSLNSSESDKDQDYDYLNEWGNRFKKLADMYGGGEDD.

Residues 1-22 (MGPWSRSLSALLLLLQVSSWLC) form the signal peptide. A propeptide spanning residues 23–154 (QEPEPCHPGF…SSSGLRRRKR (132 aa)) is cleaved from the precursor. N144 carries N-linked (GlcNAc...) asparagine glycosylation. 5 consecutive Cadherin domains span residues 155 to 262 (DWVI…KPEF), 263 to 375 (TQEV…PPVF), 376 to 486 (NPTT…APIF), 487 to 593 (VPPE…DNAP), and 594 to 697 (IPEP…VCKK). Over 155 to 709 (DWVIPPISCP…PIEAGLQIPA (555 aa)) the chain is Extracellular. Position 257 (D257) interacts with Ca(2+). The O-linked (Man...) serine glycan is linked to S280. T285 is a glycosylation site (O-linked (Man...) threonine). D288 serves as a coordination point for Ca(2+). Residues T358, T470, T472, and T509 are each glycosylated (O-linked (Man...) threonine). A glycan (N-linked (GlcNAc...) asparagine) is linked at N558. O-linked (Man...) threonine glycans are attached at residues T576, T578, and T580. N-linked (GlcNAc...) asparagine glycosylation occurs at N637. Residues 710–730 (ILGILGGILALLILILLLLLF) traverse the membrane as a helical segment. At 731 to 882 (LRRRAVVKEP…ADMYGGGEDD (152 aa)) the chain is on the cytoplasmic side. The tract at residues 747–767 (DTRDNVYYYDEEGGGEEDQDF) is disordered. Phosphotyrosine; by SRC is present on residues Y753, Y754, and Y755. The segment covering 755 to 767 (YDEEGGGEEDQDF) has biased composition (acidic residues). The segment at 758 to 769 (EGGGEEDQDFDL) is required for binding CTNND1 and PSEN1. Phosphoserine occurs at positions 770, 793, 838, 840, and 846. The required for binding alpha, beta and gamma catenins stretch occupies residues 811 to 882 (IDENLKAADT…ADMYGGGEDD (72 aa)).

As to quaternary structure, homodimer; disulfide-linked. Component of an E-cadherin/ catenin adhesion complex composed of at least E-cadherin/CDH1, beta-catenin/CTNNB1 or gamma-catenin/JUP, and potentially alpha-catenin/CTNNA1; the complex is located to adherens junctions. Found in a complex composed of CDH1, RAP1A and PKP3; PKP3 acts as a scaffold protein within the complex, the complex is required for CDH1 localization to mature desmosome cell junctions. Interacts with the TRPV4 and CTNNB1 complex. Interacts with CTNND1. The stable association of CTNNA1 is controversial as CTNNA1 was shown not to bind to F-actin when assembled in the complex. Alternatively, the CTNNA1-containing complex may be linked to F-actin by other proteins such as LIMA1. Interaction with PSEN1, cleaves CDH1 resulting in the disassociation of cadherin-based adherens junctions (CAJs). Interacts with AJAP1 and DLGAP5. Interacts with TBC1D2. Interacts with LIMA1. Interacts with CAV1. Interacts with PIP5K1C. Interacts with RAB8B. Interacts with DDR1; this stabilizes CDH1 at the cell surface and inhibits its internalization. Interacts with RAPGEF2. Interacts with KLRG1. Forms a ternary complex composed of ADAM10, CADH1 and EPHA4; within the complex, CADH1 is cleaved by ADAM10 which disrupts adherens junctions. Interacts with SPEF1. Interacts with CTNNB1 and PKP2. Interacts with AMOTL2; the interaction may facilitate binding of radial actin fibers to cell junction complexes. Interacts with DSG3; the interaction is required for CDH1 localization to developing adherens junctions. In terms of processing, during apoptosis or with calcium influx, cleaved by a membrane-bound metalloproteinase (ADAM10), PS1/gamma-secretase and caspase-3. Processing by the metalloproteinase, induced by calcium influx, causes disruption of cell-cell adhesion and the subsequent release of beta-catenin into the cytoplasm. The residual membrane-tethered cleavage product is rapidly degraded via an intracellular proteolytic pathway. Cleavage by caspase-3 releases the cytoplasmic tail resulting in disintegration of the actin microfilament system. The gamma-secretase-mediated cleavage promotes disassembly of adherens junctions. During development of the cochlear organ of Corti, cleavage by ADAM10 at adherens junctions promotes pillar cell separation. N-glycosylation at Asn-637 is essential for expression, folding and trafficking. Addition of bisecting N-acetylglucosamine by MGAT3 modulates its cell membrane location. Post-translationally, ubiquitinated by a SCF complex containing SKP2, which requires prior phosphorylation by CK1/CSNK1A1. Ubiquitinated by CBLL1/HAKAI, requires prior phosphorylation at Tyr-754. In terms of processing, O-glycosylated. O-manosylated by TMTC1, TMTC2, TMTC3 or TMTC4. Thr-285 and Thr-509 are O-mannosylated by TMTC2 or TMTC4 but not TMTC1 or TMTC3.

Its subcellular location is the cell junction. The protein localises to the adherens junction. It is found in the cell membrane. It localises to the endosome. The protein resides in the golgi apparatus. Its subcellular location is the trans-Golgi network. The protein localises to the cytoplasm. It is found in the desmosome. Its function is as follows. Cadherins are calcium-dependent cell adhesion proteins. They preferentially interact with themselves in a homophilic manner in connecting cells; cadherins may thus contribute to the sorting of heterogeneous cell types. CDH1 is involved in mechanisms regulating cell-cell adhesions, mobility and proliferation of epithelial cells. Promotes organization of radial actin fiber structure and cellular response to contractile forces, via its interaction with AMOTL2 which facilitates anchoring of radial actin fibers to CDH1 junction complexes at the cell membrane. Plays a role in the early stages of desmosome cell-cell junction formation via facilitating the recruitment of DSG2 and DSP to desmosome plaques. Has a potent invasive suppressor role. It is a ligand for integrin alpha-E/beta-7. E-Cad/CTF2 promotes non-amyloidogenic degradation of Abeta precursors. Has a strong inhibitory effect on APP C99 and C83 production. This is Cadherin-1 (CDH1) from Pongo abelii (Sumatran orangutan).